Reading from the N-terminus, the 110-residue chain is N(4)-acetylcytidine amidohydrolase (110 aa).

Positions 6–93 constitute an ASCH domain; that stretch reads TFFERFEQDI…IQEIYPGLEQ (88 aa). Residue lysine 20 is the Proton acceptor of the active site. Threonine 23 serves as the catalytic Nucleophile. Glutamate 73 serves as the catalytic Proton donor.

This sequence belongs to the N(4)-acetylcytidine amidohydrolase family.

It carries out the reaction N(4)-acetylcytidine + H2O = cytidine + acetate + H(+). The catalysed reaction is N(4)-acetyl-2'-deoxycytidine + H2O = 2'-deoxycytidine + acetate + H(+). It catalyses the reaction N(4)-acetylcytosine + H2O = cytosine + acetate + H(+). Functionally, catalyzes the hydrolysis of N(4)-acetylcytidine (ac4C). In Shewanella sp. (strain ANA-3), this protein is N(4)-acetylcytidine amidohydrolase.